The primary structure comprises 329 residues: Isopenicillin N synthase (329 aa).

Isopenicillin N contacts are provided by Arg-87, Tyr-91, Ser-183, and Tyr-189. The N-[(5S)-5-amino-5-carboxypentanoyl]-L-cysteinyl-D-valine site is built by Arg-87, Tyr-91, Ser-183, Tyr-189, His-212, and Asp-214. Positions 180-286 (SLSSVSLIRY…RLSLPFFLNG (107 aa)) constitute a Fe2OG dioxygenase domain. Fe(2+) contacts are provided by His-212, Asp-214, and His-268. 2-oxoglutarate is bound at residue Arg-277. Isopenicillin N is bound at residue Ser-279. Ser-279 is an N-[(5S)-5-amino-5-carboxypentanoyl]-L-cysteinyl-D-valine binding site.

It belongs to the iron/ascorbate-dependent oxidoreductase family. Requires Fe cation as cofactor. L-ascorbate is required as a cofactor.

It carries out the reaction N-[(5S)-5-amino-5-carboxypentanoyl]-L-cysteinyl-D-valine + O2 = isopenicillin N + 2 H2O. It participates in antibiotic biosynthesis; penicillin G biosynthesis; penicillin G from L-alpha-aminoadipate and L-cysteine and L-valine: step 2/3. In terms of biological role, removes, in the presence of oxygen, 4 hydrogen atoms from delta-L-(alpha-aminoadipyl)-L-cysteinyl-D-valine (ACV) to form the azetidinone and thiazolidine rings of isopenicillin. The polypeptide is Isopenicillin N synthase (pcbC) (Streptomyces clavuligerus).